We begin with the raw amino-acid sequence, 400 residues long: Phosphoglycerate kinase (400 aa).

Substrate contacts are provided by residues 21-23 (DFN), Arg-36, 59-62 (HLGR), Arg-119, and Arg-160. Residues Lys-211, Glu-329, and 356–359 (GGDS) each bind ATP.

Belongs to the phosphoglycerate kinase family. In terms of assembly, monomer.

It is found in the cytoplasm. It carries out the reaction (2R)-3-phosphoglycerate + ATP = (2R)-3-phospho-glyceroyl phosphate + ADP. It participates in carbohydrate degradation; glycolysis; pyruvate from D-glyceraldehyde 3-phosphate: step 2/5. The protein is Phosphoglycerate kinase of Lactiplantibacillus plantarum (strain ATCC BAA-793 / NCIMB 8826 / WCFS1) (Lactobacillus plantarum).